The chain runs to 567 residues: UPF0313 protein CTN_0332 (567 aa).

Residues K288–K560 form the Radical SAM core domain. Positions 303, 307, and 310 each coordinate [4Fe-4S] cluster.

The protein belongs to the UPF0313 family. Requires [4Fe-4S] cluster as cofactor.

The protein is UPF0313 protein CTN_0332 of Thermotoga neapolitana (strain ATCC 49049 / DSM 4359 / NBRC 107923 / NS-E).